Here is a 274-residue protein sequence, read N- to C-terminus: Ommochrome-binding protein (274 aa).

Positions 1–18 (MKLLILTICALHVNQMMA) are cleaved as a signal peptide. An N-linked (GlcNAc...) asparagine glycan is attached at asparagine 183.

In terms of assembly, monomer. As to expression, present in larval hemolymph and synthesized by the fat body.

Functionally, binds to an ommochrome, ommatin D which is a yellow chromophore. May be involved in guiding the chromophore through the hemolymph from the epidermis to the gut. The polypeptide is Ommochrome-binding protein (Manduca sexta (Tobacco hawkmoth)).